Reading from the N-terminus, the 480-residue chain is Pyruvate kinase II (480 aa).

Arg36 serves as a coordination point for substrate. Residues Asn38, Ser40, and Asp70 each coordinate K(+). 38–41 (NFSH) is an ATP binding site. The ATP site is built by Arg77 and Lys160. Position 223 (Lys223) interacts with substrate. Glu225 is a binding site for Mg(2+). Gly251, Asp252, and Thr284 together coordinate substrate. A Mg(2+)-binding site is contributed by Asp252.

It belongs to the pyruvate kinase family. In terms of assembly, homotetramer. Requires Mg(2+) as cofactor. The cofactor is K(+).

It carries out the reaction pyruvate + ATP = phosphoenolpyruvate + ADP + H(+). Its pathway is carbohydrate degradation; glycolysis; pyruvate from D-glyceraldehyde 3-phosphate: step 5/5. Its activity is regulated as follows. Allosterically activated by AMP and by several sugar phosphates. Belongs to type II PK. Functionally, catalyzes the formation of pyruvate in the last step of glycolysis, it is irreversible under physiological conditions. The reaction is critical for the control of metabolic flux in the second part of glycolysis. This is Pyruvate kinase II (pykA) from Salmonella typhimurium (strain LT2 / SGSC1412 / ATCC 700720).